Consider the following 252-residue polypeptide: tRNA (guanine-N(1)-)-methyltransferase (252 aa).

Residues Gly-113 and Leu-133–Leu-138 contribute to the S-adenosyl-L-methionine site.

Belongs to the RNA methyltransferase TrmD family. In terms of assembly, homodimer.

It localises to the cytoplasm. It carries out the reaction guanosine(37) in tRNA + S-adenosyl-L-methionine = N(1)-methylguanosine(37) in tRNA + S-adenosyl-L-homocysteine + H(+). Its function is as follows. Specifically methylates guanosine-37 in various tRNAs. The sequence is that of tRNA (guanine-N(1)-)-methyltransferase from Stenotrophomonas maltophilia (strain R551-3).